We begin with the raw amino-acid sequence, 409 residues long: MGNILRKGQQIYLAGDMKKQMLLNKDGTPKRKVGRPGRKRIDSEAKSRRTAQNRAAQRAFRDRKEAKMKSLQERVELLEQKDAQNKTTTDFLLCSLKSLLSEITKYRAKNSDDERILAFLDDLQEQQKRENEKGTSTAVSKAAKELPSPNSDENMTVNTSIEVQPHTQENEKVMWNIGSWNAPSLTNSWDSPPGNRTGAVTIGDESINGSEMPDFSLDLVSNDRQTGLEALDYDIHNYFPQHSERLTAEKIDTSACQCEIDQKYLPYETEDDTLFPSVLPLAVGSQCNNICNRKCIGTKPCSNKEIKCDLITSHLLNQKSLASVLPVAASHTKTIRTQSEAIEHISSAISNGKASCYHILEEISSLPKYSSLDIDDLCSELIIKAKCTDDCKIVVKARDLQSALVRQLL.

2 consecutive short sequence motifs (bipartite nuclear localization signal) follow at residues 17–24 (MKKQMLLN) and 47–54 (SRRTAQNR). Residues 26-64 (DGTPKRKVGRPGRKRIDSEAKSRRTAQNRAAQRAFRDRK) form a disordered region. In terms of domain architecture, bZIP spans 43-106 (SEAKSRRTAQ…KSLLSEITKY (64 aa)). The basic motif stretch occupies residues 46–69 (KSRRTAQNRAAQRAFRDRKEAKMK). Positions 71-99 (LQERVELLEQKDAQNKTTTDFLLCSLKSL) are leucine-zipper. The tract at residues 127-156 (QKRENEKGTSTAVSKAAKELPSPNSDENMT) is disordered. The interval 356 to 387 (CYHILEEISSLPKYSSLDIDDLCSELIIKAKC) is c-CRD. A Nuclear export signal motif is present at residues 372-379 (LDIDDLCS).

Belongs to the bZIP family. YAP subfamily. In terms of assembly, homodimer; disulfide-linked, upon oxidation. Interacts in the nucleus with the nuclear export protein CRM1. Interacts with RCK1. Post-translationally, depending on the oxidative stress inducing agent, CAD1/YAP2 can undergo two distinct conformational changes, both through oxidation of cysteine residues, and both masking the nuclear export signal, thus abolishing nuclear export by CRM1/exportin 1. Peroxide stress induces the formation of possible intramolecular disulfide bonds as well as intermolcular disulfide within a homodimer. Cadmium may bind directly to specific cysteine residues (Cys-391 and either Cys-356 or Cys-387) in the c-CRD.

It localises to the cytoplasm. It is found in the nucleus. In terms of biological role, transcription activator involved in oxidative stress response and cadmium resistance. Regulates the transcription of genes overrepresented for the function of stabilizing proteins including the inducible Hsp90-family protein HSP82. Preferentially binds to promoters with the core binding site 5'-TTA[CG]TAA-3'. Activity of the transcription factor is controlled through oxidation of specific cysteine residues resulting in the alteration of its subcellular location. Activation by alkyl hydroperoxides or cadmium induces nuclear accumulation and as a result CAD1/YAP2 transcriptional activity. This is AP-1-like transcription factor YAP2 from Saccharomyces cerevisiae (strain ATCC 204508 / S288c) (Baker's yeast).